A 660-amino-acid polypeptide reads, in one-letter code: MNPDLQKERAGASFNPELLTNVLDGSPENTRRRREIENLILNDPDFQHENLNFLSRSQRYEVAVKKSAIMVQKMRKFGIADPAEIMWFKKLHLVNFVEPVGLNYSMFIPTLLNQGTTAQQEKWLHSSKGLEIIGTYAQTEMGHGTHLRGLETTATYDPETQEFILNSPTVTSIKWWPGGLGKTSNHAIVLAQLFTQGKCYGLHAFIVPIRELGTHKPLPGITVGDIGPKFGYDEMDNGYLKMDNYRIPRENMLMKHAQVKPDGTYVKPLNNKLTYGTMVFIRSFLVGESARSLSKACTIAVRYSAVRHQSEINPGEPEPQILDYQTQQYKLFPLLATAYAFQFVGAYMKETYLRINEDIGHGDLSELPELHALTAGLKAFTSWTTNTAIEACRMACGGHGYSHCSGLPNIYVTFTPTCTFEGENTVMMLQTARFLMKSYDQVHSGKLVCGMVSYLNDLPSQRIQPQQVAVWPTMVDINSPDSLTEAYKLRAARLVEIAAKNLQTEVIHRKSKEVAWNLTSIDLVRASEAHCHYVVVKLFTEKVLQIQEKSIQAVLRRLCLLYSLYGISQNAGDFLQGSIMTESQITQVNGRIKELLTAIRPDAVALVDAFDFQDVTLGSVLGRYDGNVYENLFEWAKKSPLNKTEVHESYKHLKSLQSKL.

Residue Ser26 is modified to Phosphoserine. The residue at position 65 (Lys65) is an N6-acetyllysine. N6-succinyllysine is present on residues Lys89 and Lys90. Thr139 and Gly178 together coordinate FAD. Lys216 is subject to N6-acetyllysine. The residue at position 241 (Lys241) is an N6-succinyllysine. Residues Lys255, Lys267, and Lys272 each carry the N6-acetyllysine modification. At Lys349 the chain carries N6-succinyllysine. The active-site Proton acceptor is the Glu421. N6-acetyllysine; alternate occurs at positions 437 and 446. An N6-succinyllysine; alternate mark is found at Lys437 and Lys446. Lys500 carries the N6-acetyllysine modification. At Lys512 the chain carries N6-acetyllysine; alternate. An N6-succinyllysine; alternate modification is found at Lys512. Lys542 bears the N6-succinyllysine mark. The residue at position 637 (Lys637) is an N6-acetyllysine; alternate. Lys637 is subject to N6-succinyllysine; alternate. Lys643 carries the N6-succinyllysine modification. Phosphoserine is present on Ser649. Lys651 is modified (N6-acetyllysine). The residue at position 654 (Lys654) is an N6-succinyllysine. The Microbody targeting signal signature appears at 658–660 (SKL).

It belongs to the acyl-CoA oxidase family. Homodimer. Interacts with LONP2. FAD is required as a cofactor.

The protein resides in the peroxisome. It carries out the reaction a 2,3-saturated acyl-CoA + O2 = a (2E)-enoyl-CoA + H2O2. The enzyme catalyses hexadecanoyl-CoA + O2 = (2E)-hexadecenoyl-CoA + H2O2. It catalyses the reaction dodecanoyl-CoA + O2 = (2E)-dodecenoyl-CoA + H2O2. The catalysed reaction is octanoyl-CoA + O2 = (2E)-octenoyl-CoA + H2O2. It carries out the reaction decanoyl-CoA + O2 = (2E)-decenoyl-CoA + H2O2. The enzyme catalyses tetradecanoyl-CoA + O2 = (2E)-tetradecenoyl-CoA + H2O2. It catalyses the reaction hexadecanedioyl-CoA + O2 = (2E)-hexadecenedioyl-CoA + H2O2. The catalysed reaction is tetracosanoyl-CoA + O2 = (2E)-tetracosenoyl-CoA + H2O2. It carries out the reaction glutaryl-CoA + O2 = (2E)-glutaconyl-CoA + H2O2. The enzyme catalyses hexanoyl-CoA + O2 = (2E)-hexenoyl-CoA + H2O2. It catalyses the reaction octadecanoyl-CoA + O2 = (2E)-octadecenoyl-CoA + H2O2. The catalysed reaction is (5Z,8Z,11Z,14Z,17Z)-eicosapentaenoyl-CoA + O2 = (2E,5Z,8Z,11Z,14Z,17Z)-icosahexaenoyl-CoA + H2O2. It carries out the reaction (6Z,9Z,12Z,15Z,18Z,21Z)-tetracosahexaenoyl-CoA + O2 = (2E,6Z,9Z,12Z,15Z,18Z,21Z)-tetracosaheptaenoyl-CoA + H2O2. It functions in the pathway lipid metabolism; peroxisomal fatty acid beta-oxidation. Its function is as follows. Involved in the initial and rate-limiting step of peroxisomal beta-oxidation of straight-chain saturated and unsaturated very-long-chain fatty acids. Catalyzes the desaturation of fatty acyl-CoAs such as palmitoyl-CoA (hexadecanoyl-CoA) to 2-trans-enoyl-CoAs ((2E)-enoyl-CoAs) such as (2E)-hexadecenoyl-CoA, and donates electrons directly to molecular oxygen (O(2)), thereby producing hydrogen peroxide (H(2)O(2)). The chain is Peroxisomal acyl-coenzyme A oxidase 1 from Bos taurus (Bovine).